A 958-amino-acid polypeptide reads, in one-letter code: Coiled-coil domain-containing protein 33 (958 aa).

A C2 domain is found at 214–353 (SPEEPLIASQ…LVKPTESGKA (140 aa)). Positions 602–617 (SKDTVSSTMDLSTSTP) are enriched in polar residues. Positions 602–628 (SKDTVSSTMDLSTSTPREAEEEPLVPE) are disordered. Coiled-coil stretches lie at residues 632-774 (DTEM…LEDR) and 859-899 (FNLL…RLQE). The tract at residues 899–958 (EQEKGFRHPSNSIIIEQPSALTHSMDLKQPSELEPLLPSSDSKLNKPLSPQKETANSQQT) is disordered. Polar residues-rich tracts occupy residues 907–920 (PSNSIIIEQPSALT) and 949–958 (QKETANSQQT).

The sequence is that of Coiled-coil domain-containing protein 33 (CCDC33) from Homo sapiens (Human).